The primary structure comprises 170 residues: Putative pre-16S rRNA nuclease (170 aa).

The interval 1 to 25 (MVPAQHRPPDRPGDPAHDPGRGRRL) is disordered. The segment covering 7–21 (RPPDRPGDPAHDPGR) has biased composition (basic and acidic residues).

Belongs to the YqgF nuclease family.

The protein localises to the cytoplasm. Its function is as follows. Could be a nuclease involved in processing of the 5'-end of pre-16S rRNA. The polypeptide is Putative pre-16S rRNA nuclease (Mycobacterium tuberculosis (strain ATCC 25177 / H37Ra)).